A 387-amino-acid chain; its full sequence is BarH-like 2 homeobox protein (387 aa).

3 disordered regions span residues 1-145 (MTME…FLIK), 157-240 (CAPY…TAFS), and 367-387 (PGGQPALNPLSSPIPGTPHPR). Over residues 7 to 24 (SGSSFGIDTILSSASSGS) the composition is skewed to polar residues. Residues 100-113 (APTQSLQPLPQQQQ) show a composition bias toward low complexity. Residues 114–126 (PLPPQQPPPPPPQ) are compositionally biased toward pro residues. Residues 127 to 141 (QLGSAASAPRTSTSS) are compositionally biased toward low complexity. A compositionally biased stretch (polar residues) spans 160-178 (YSTSVSSPHHTPKQESNAV). The span at 180 to 220 (ESFRPKLEQEDSKTKLDKREDSQSDIKCHGTKEEGDREITS) shows a compositional bias: basic and acidic residues. The homeobox DNA-binding region spans 232 to 291 (PRKARTAFSDHQLNQLERSFERQKYLSVQDRMDLAAALNLTDTQVKTWYQNRRTKWKRQT).

It belongs to the BAR homeobox family.

The protein resides in the nucleus. Potential regulator of neural basic helix-loop-helix genes. The sequence is that of BarH-like 2 homeobox protein (BARHL2) from Homo sapiens (Human).